The following is a 417-amino-acid chain: Synaptic vesicle membrane protein VAT-1 homolog-like (417 aa).

2 disordered regions span residues 1-33 and 382-417; these read MAKEGVEKAEETEQMIEKETSKEPAEGGDGSHR and PTPLMANDSTETSEAGEEEEDHEGDSENKERMPFIQ. S390 carries the post-translational modification Phosphoserine. Residues T391 and T393 each carry the phosphothreonine modification. S394 bears the Phosphoserine mark. Positions 395–405 are enriched in acidic residues; the sequence is EAGEEEEDHEG. The span at 406 to 417 shows a compositional bias: basic and acidic residues; sequence DSENKERMPFIQ.

This sequence belongs to the zinc-containing alcohol dehydrogenase family. Quinone oxidoreductase subfamily.

The polypeptide is Synaptic vesicle membrane protein VAT-1 homolog-like (Vat1l) (Mus musculus (Mouse)).